The primary structure comprises 215 residues: Probable transaldolase (215 aa).

K83 (schiff-base intermediate with substrate) is an active-site residue.

Belongs to the transaldolase family. Type 3B subfamily.

The protein localises to the cytoplasm. It catalyses the reaction D-sedoheptulose 7-phosphate + D-glyceraldehyde 3-phosphate = D-erythrose 4-phosphate + beta-D-fructose 6-phosphate. It functions in the pathway carbohydrate degradation; pentose phosphate pathway; D-glyceraldehyde 3-phosphate and beta-D-fructose 6-phosphate from D-ribose 5-phosphate and D-xylulose 5-phosphate (non-oxidative stage): step 2/3. Transaldolase is important for the balance of metabolites in the pentose-phosphate pathway. The chain is Probable transaldolase from Heliobacterium modesticaldum (strain ATCC 51547 / Ice1).